The chain runs to 522 residues: Target of rapamycin complex 2 subunit MAPKAP1 (522 aa).

At alanine 2 the chain carries N-acetylalanine. Positions 2–184 (AFLDNPTIIL…KKIDVYLPLH (183 aa)) are interaction with MAP3K2. Positions 2-267 (AFLDNPTIIL…GFSTLALVEK (266 aa)) are interaction with NBN. Threonine 86 is subject to Phosphothreonine. 4 positions are modified to phosphoserine: serine 128, serine 186, serine 315, and serine 356. A CRIM domain is found at 139-267 (QSILSVRLEQ…GFSTLALVEK (129 aa)). The segment at 279-353 (LFVRINAAHG…QSAWEFCLVR (75 aa)) is SIN1-type RBD. The region spanning 382-487 (HYKSFKVSMI…IVLKVNYILE (106 aa)) is the SIN1-type PH domain. Arginine 393 serves as a coordination point for a 1,2-diacyl-sn-glycero-3-phospho-(1D-myo-inositol-3,4,5-trisphosphate). The residue at position 398 (threonine 398) is a Phosphothreonine. A 1,2-diacyl-sn-glycero-3-phospho-(1D-myo-inositol-3,4,5-trisphosphate)-binding residues include lysine 428 and lysine 464. The interval 468–522 (FESDAATVNEIVLKVNYILESRASTARADYFAQKQRKLNRRTSFSFQKEKKSGQQ) is interaction with ATF2. Position 510 is a phosphoserine (serine 510).

This sequence belongs to the SIN1 family. Component of the mechanistic target of rapamycin complex 2 (mTORC2), consisting in two heterotretramers composed of MTOR, MLST8, RICTOR and MAPKAP1/SIN1. The mTORC2 core complex associates with PRR5/PROTOR1 and/or PRR5L/PROTOR2. Contrary to mTORC1, mTORC2 does not bind to and is not sensitive to FKBP12-rapamycin. Interacts with MAP3K2. Interacts with ATF2. Interacts with MAPK8. Interacts with GTP-bound HRAS and KRAS; inhibiting their activity. Interacts with IFNAR2. Phosphorylation at Ser-128 by PKC promotes relocalization to the perinuclear region, where the mTORC2 complex specifically mediates phosphorylation of SGK1. Phosphorylated at Thr-86 by AKT1 or RPS6KB1 in the presence of growth factors; the effect of this phosphorylation is however unclear. According to two studies, phosphorylation at Thr-86 by AKT1 is part of a positive feedback loop that increases mTORC2 activation. According to another study, phosphorylation at Thr-86 and Thr-398 by RPS6KB1 promotes dissociation from the mTORC2 complex, leading to inhibit mTORC2 signaling.

Its subcellular location is the cell membrane. The protein resides in the endoplasmic reticulum membrane. It localises to the early endosome membrane. The protein localises to the late endosome membrane. It is found in the lysosome membrane. Its subcellular location is the golgi apparatus membrane. The protein resides in the mitochondrion outer membrane. It localises to the cytoplasm. The protein localises to the perinuclear region. It is found in the nucleus. With respect to regulation, phosphatidylinositol 3,4,5-trisphosphate (PI(3,4,5)P3) promotes MTOR activation by relieving MAPKAP1/SIN1-mediated inhibition of MTOR that takes place in absence of PI(3,4,5)P3. Component of the mechanistic target of rapamycin complex 2 (mTORC2), which transduces signals from growth factors to pathways involved in proliferation, cytoskeletal organization, lipogenesis and anabolic output. In response to growth factors, mTORC2 phosphorylates and activates AGC protein kinase family members, including AKT (AKT1, AKT2 and AKT3), PKC (PRKCA, PRKCB and PRKCE) and SGK1. In contrast to mTORC1, mTORC2 is nutrient-insensitive. Within the mTORC2 complex, MAPKAP1/SIN1 acts as a substrate adapter which recognizes and binds AGC protein kinase family members for phosphorylation by MTOR. mTORC2 plays a critical role in AKT1 activation by mediating phosphorylation of different sites depending on the context, such as 'Thr-450', 'Ser-473', 'Ser-477' or 'Thr-479', facilitating the phosphorylation of the activation loop of AKT1 on 'Thr-308' by PDPK1/PDK1 which is a prerequisite for full activation. mTORC2 catalyzes the phosphorylation of SGK1 at 'Ser-422' and of PRKCA on 'Ser-657'. The mTORC2 complex also phosphorylates various proteins involved in insulin signaling, such as FBXW8 and IGF2BP1. mTORC2 acts upstream of Rho GTPases to regulate the actin cytoskeleton, probably by activating one or more Rho-type guanine nucleotide exchange factors. mTORC2 promotes the serum-induced formation of stress-fibers or F-actin. MAPKAP1 inhibits MAP3K2 by preventing its dimerization and autophosphorylation. Inhibits HRAS and KRAS independently of mTORC2 complex. Enhances osmotic stress-induced phosphorylation of ATF2 and ATF2-mediated transcription. Involved in ciliogenesis, regulates cilia length through its interaction with CCDC28B independently of mTORC2 complex. The polypeptide is Target of rapamycin complex 2 subunit MAPKAP1 (MAPKAP1) (Bos taurus (Bovine)).